The chain runs to 243 residues: Cell division protein FtsQ (243 aa).

Topologically, residues 1–19 (MKRYNAKRKTHRNLKSIKK) are cytoplasmic. A helical membrane pass occupies residues 20–40 (LIPTVLALLAFVSLLAGIITL). The Periplasmic portion of the chain corresponds to 41–243 (HNPKTLPFRQ…SNGLAIQWKN (203 aa)). The POTRA domain occupies 46 to 115 (LPFRQIKITV…NELEIQVEEQ (70 aa)).

Belongs to the FtsQ/DivIB family. FtsQ subfamily. Part of a complex composed of FtsB, FtsL and FtsQ.

Its subcellular location is the cell inner membrane. In terms of biological role, essential cell division protein. May link together the upstream cell division proteins, which are predominantly cytoplasmic, with the downstream cell division proteins, which are predominantly periplasmic. May control correct divisome assembly. The protein is Cell division protein FtsQ of Coxiella burnetii (strain RSA 493 / Nine Mile phase I).